The following is a 553-amino-acid chain: Probable malate:quinone oxidoreductase (553 aa).

The interval 524–553 (PPPKIDLGAPSQATGNAPARPAKASADMAL) is disordered.

Belongs to the MQO family. FAD serves as cofactor.

It catalyses the reaction (S)-malate + a quinone = a quinol + oxaloacetate. The protein operates within carbohydrate metabolism; tricarboxylic acid cycle; oxaloacetate from (S)-malate (quinone route): step 1/1. This chain is Probable malate:quinone oxidoreductase, found in Burkholderia cenocepacia (strain HI2424).